Reading from the N-terminus, the 591-residue chain is MRSHYCGHLNKSLVGQTVELCGWVNRRRDLGGLIFIDMRDREGIVQVVVDPDMADVFAVANQLRSEFCIKLTGEVRARPESQVNKEMATGEVELLARSLEIINRSDVLPLDFNQKNSEEQRLKYRYLDLRRPEMSDRIKLRAKASSFVRRFLDTHGFLDIETPVLTKATPEGARDYLVPSRVHKGSFYALPQSPQLFKQLLMMSGFDRYYQIVKCFRDEDLRADRQPEFTQIDIETSFMTAEQVRAVTEKMIREMWLELLNVDLGDFPIMPYSEAMRRFGSDKPDLRNPMELVDVADLLKDVDFKVFSGPANDPKGRVAALCIPGGAALTRKQIDEYTAFVAIYGAKGLAWLKVNDLAAGMEGIQSPVAKFLTEEIIQAIIERTQAQTGDIILFGADSAKVVAEALGALRLKAGKELGITNESAWAPLWVVDFPMFESDDEGNVAAMHHPFTSPLNLSPEQLKANPEEALSNAYDMVLNGYEVGGGSVRIHNAEMQSAVFDILGITPEEQRLKFGFLLDALKFGTPPHAGLAFGLDRLVMLLCGTENIRDVIAFPKTTAAACLMTDAPSLANPAALEELAIAVKLATKDKA.

Glutamate 171 serves as a coordination point for L-aspartate. An aspartate region spans residues 195-198; sequence QLFK. An L-aspartate-binding site is contributed by arginine 217. Residues 217–219 and glutamine 226 contribute to the ATP site; that span reads RDE. An L-aspartate-binding site is contributed by histidine 448. Glutamate 482 is an ATP binding site. Position 489 (arginine 489) interacts with L-aspartate. Position 534–537 (534–537) interacts with ATP; that stretch reads GLDR.

The protein belongs to the class-II aminoacyl-tRNA synthetase family. Type 1 subfamily. Homodimer.

Its subcellular location is the cytoplasm. The catalysed reaction is tRNA(Asp) + L-aspartate + ATP = L-aspartyl-tRNA(Asp) + AMP + diphosphate. Catalyzes the attachment of L-aspartate to tRNA(Asp) in a two-step reaction: L-aspartate is first activated by ATP to form Asp-AMP and then transferred to the acceptor end of tRNA(Asp). This Vibrio cholerae serotype O1 (strain ATCC 39541 / Classical Ogawa 395 / O395) protein is Aspartate--tRNA ligase.